Reading from the N-terminus, the 700-residue chain is Elongation factor G (700 aa).

In terms of domain architecture, tr-type G spans 6-286 (HKVRNIGIMA…AVIDYLPSPL (281 aa)). GTP is bound by residues 15–22 (AHIDAGKT), 79–83 (DTPGH), and 133–136 (NKMD).

Belongs to the TRAFAC class translation factor GTPase superfamily. Classic translation factor GTPase family. EF-G/EF-2 subfamily.

The protein localises to the cytoplasm. Catalyzes the GTP-dependent ribosomal translocation step during translation elongation. During this step, the ribosome changes from the pre-translocational (PRE) to the post-translocational (POST) state as the newly formed A-site-bound peptidyl-tRNA and P-site-bound deacylated tRNA move to the P and E sites, respectively. Catalyzes the coordinated movement of the two tRNA molecules, the mRNA and conformational changes in the ribosome. The chain is Elongation factor G from Leifsonia xyli subsp. xyli (strain CTCB07).